A 286-amino-acid chain; its full sequence is MTFSQMILNLQEFWQKQGCAIMQPYDFPAGAGTFHPATFLRSLGKKPWAAAYVAPSRRPTDGRYGENPNRLGAYYQFQVLIKPSPDNIQELYLKSLENLGFDLKSHDIRFVEDNWESPSLGAWGLGWEVWLDGMEVTQFTYFQQVGGISVDLVSVEITYGLERLAMYLQDVDNVYDIVWNEFNGEKITYKDVHKQGEFEFSKYNFEVSDVKTLNVQFENAYNECKNALEAKLALPAYDYCMLAAHTFNLLDARGAISATQRQDFMLKIRELSKNCALVYKENLDEN.

Belongs to the class-II aminoacyl-tRNA synthetase family. As to quaternary structure, tetramer of two alpha and two beta subunits.

It is found in the cytoplasm. The catalysed reaction is tRNA(Gly) + glycine + ATP = glycyl-tRNA(Gly) + AMP + diphosphate. The sequence is that of Glycine--tRNA ligase alpha subunit from Campylobacter lari (strain RM2100 / D67 / ATCC BAA-1060).